A 25-amino-acid chain; its full sequence is Caerin-2.2 (25 aa).

This sequence belongs to the frog skin active peptide (FSAP) family. Caerin subfamily. As to expression, expressed by the skin parotoid and/or rostral glands.

Its subcellular location is the secreted. Antimicrobial peptide, that adopts an alpha helical conformation which can disrupt bacterial membranes. Each caerin displays a different antimicrobial specificity. The chain is Caerin-2.2 from Ranoidea caerulea (Green tree frog).